A 207-amino-acid chain; its full sequence is 23 kDa calcium-binding protein (207 aa).

M1 is subject to Blocked amino end (Met). EF-hand domains are found at residues 17-52 (AKLDVARKLFAQFDSNKNGTLDPSEVAGLIKTTFEN), 60-95 (VTADDVKLYMKSVDVDNNGLVSYSEYEEYVIACLKK), 119-154 (MKLDVARRLFAKYDSDKSGQLEEKEVYGVITETYKQ), and 161-196 (PTEADVKLWMSMTDTDKNGTVSIVEYEDFVISGLKK). Residues D30, N32, N34, T36, E41, D73, D75, N77, E84, D132, D134, S136, Q138, E143, D174, D176, N178, T180, and E185 each contribute to the Ca(2+) site.

Expected to play a crucial role in calcium-dependent regulation of ciliary movement. The sequence is that of 23 kDa calcium-binding protein from Tetrahymena thermophila.